A 363-amino-acid chain; its full sequence is Glycerol-3-phosphate dehydrogenase [NAD(+)], cytoplasmic (363 aa).

NAD(+)-binding positions include 11–16 (GSGNWG), Phe-98, Lys-121, and Ala-155. Lys-121 is a binding site for substrate. Lys-206 functions as the Proton acceptor in the catalytic mechanism. 2 residues coordinate NAD(+): Arg-270 and Gln-299. 270-271 (RN) provides a ligand contact to substrate.

Belongs to the NAD-dependent glycerol-3-phosphate dehydrogenase family. In terms of assembly, homodimer. Isoform GPDH-1 is predominant in thorax and isoform GPDH-3 in abdomen.

Its subcellular location is the cytoplasm. It carries out the reaction sn-glycerol 3-phosphate + NAD(+) = dihydroxyacetone phosphate + NADH + H(+). It functions in the pathway phospholipid metabolism; alpha-glycerophosphate cycle. The sequence is that of Glycerol-3-phosphate dehydrogenase [NAD(+)], cytoplasmic from Drosophila melanogaster (Fruit fly).